Consider the following 147-residue polypeptide: Large ribosomal subunit protein uL11 (147 aa).

The protein belongs to the universal ribosomal protein uL11 family. In terms of assembly, part of the ribosomal stalk of the 50S ribosomal subunit. Interacts with L10 and the large rRNA to form the base of the stalk. L10 forms an elongated spine to which L12 dimers bind in a sequential fashion forming a multimeric L10(L12)X complex. In terms of processing, one or more lysine residues are methylated.

In terms of biological role, forms part of the ribosomal stalk which helps the ribosome interact with GTP-bound translation factors. The polypeptide is Large ribosomal subunit protein uL11 (Corynebacterium aurimucosum (strain ATCC 700975 / DSM 44827 / CIP 107346 / CN-1) (Corynebacterium nigricans)).